The sequence spans 224 residues: UPF0758 protein VF_0126 (224 aa).

Residues 102–224 (ALTSPEHTKR…IVSFAERGWI (123 aa)) form the MPN domain. The Zn(2+) site is built by histidine 173, histidine 175, and aspartate 186. The JAMM motif motif lies at 173-186 (HNHPSGVAEPSQAD).

Belongs to the UPF0758 family.

The protein is UPF0758 protein VF_0126 of Aliivibrio fischeri (strain ATCC 700601 / ES114) (Vibrio fischeri).